A 429-amino-acid polypeptide reads, in one-letter code: Argininosuccinate lyase (429 aa).

This sequence belongs to the lyase 1 family. Argininosuccinate lyase subfamily.

The protein resides in the cytoplasm. The enzyme catalyses 2-(N(omega)-L-arginino)succinate = fumarate + L-arginine. Its pathway is amino-acid biosynthesis; L-arginine biosynthesis; L-arginine from L-ornithine and carbamoyl phosphate: step 3/3. The polypeptide is Argininosuccinate lyase (Pyrobaculum neutrophilum (strain DSM 2338 / JCM 9278 / NBRC 100436 / V24Sta) (Thermoproteus neutrophilus)).